The primary structure comprises 248 residues: Thiol:disulfide interchange protein DsbG (248 aa).

The N-terminal stretch at 1–17 (MLKKILLLALLPAIAFA) is a signal peptide. Cys126 and Cys129 form a disulfide bridge.

This sequence belongs to the thioredoxin family. DsbC subfamily. As to quaternary structure, homodimer. Interacts with ErfK, YbiS and YnhG.

The protein localises to the periplasm. Functionally, involved in disulfide bond formation. DsbG and DsbC are part of a periplasmic reducing system that controls the level of cysteine sulfenylation, and provides reducing equivalents to rescue oxidatively damaged secreted proteins such as ErfK, YbiS and YnhG. Probably also functions as a disulfide isomerase with a narrower substrate specificity than DsbC. DsbG is maintained in a reduced state by DsbD. Displays chaperone activity in both redox states in vitro. In Escherichia coli (strain K12), this protein is Thiol:disulfide interchange protein DsbG (dsbG).